A 144-amino-acid polypeptide reads, in one-letter code: NADPH-dependent 7-cyano-7-deazaguanine reductase (144 aa).

Positions 1 to 21 (MSQSPIQNPTSDPNAQSVQET) are enriched in polar residues. Residues 1 to 27 (MSQSPIQNPTSDPNAQSVQETSESKYG) form a disordered region. Cys61 functions as the Thioimide intermediate in the catalytic mechanism. Asp68 functions as the Proton donor in the catalytic mechanism. Substrate contacts are provided by residues 83–85 (VEL) and 102–103 (HE).

The protein belongs to the GTP cyclohydrolase I family. QueF type 1 subfamily.

It localises to the cytoplasm. The catalysed reaction is 7-aminomethyl-7-carbaguanine + 2 NADP(+) = 7-cyano-7-deazaguanine + 2 NADPH + 3 H(+). Its pathway is tRNA modification; tRNA-queuosine biosynthesis. In terms of biological role, catalyzes the NADPH-dependent reduction of 7-cyano-7-deazaguanine (preQ0) to 7-aminomethyl-7-deazaguanine (preQ1). This chain is NADPH-dependent 7-cyano-7-deazaguanine reductase, found in Acaryochloris marina (strain MBIC 11017).